Consider the following 119-residue polypeptide: UPF0292 protein TV1259 (119 aa).

One can recognise a Toprim domain in the interval 11-93; it reads SIPIIVEGRN…YVDLYLWNFI (83 aa). Mg(2+) contacts are provided by E17, D62, and D64.

This sequence belongs to the UPF0292 family. It depends on Mg(2+) as a cofactor.

The sequence is that of UPF0292 protein TV1259 from Thermoplasma volcanium (strain ATCC 51530 / DSM 4299 / JCM 9571 / NBRC 15438 / GSS1).